A 399-amino-acid chain; its full sequence is Glutathione S-transferase LANCL1 (399 aa).

Ala2 is subject to N-acetylalanine. Lys142 carries the post-translational modification N6-acetyllysine. Cys276 serves as a coordination point for Zn(2+). Lys317 serves as a coordination point for glutathione. Zn(2+)-binding residues include Cys322 and His323. Residue 364-367 participates in glutathione binding; the sequence is RTPD.

The protein belongs to the LanC-like protein family. In terms of assembly, interacts with the C-terminal of STOM. Interacts with the EPS8 SH3 domain. Interaction with EPS8 is inhibited by glutathione binding. Expressed in brain.

It localises to the cytoplasm. The protein localises to the cell membrane. The catalysed reaction is RX + glutathione = an S-substituted glutathione + a halide anion + H(+). The enzyme catalyses 1-chloro-2,4-dinitrobenzene + glutathione = 2,4-dinitrophenyl-S-glutathione + chloride + H(+). Functions as a glutathione transferase. Catalyzes conjugation of the glutathione (GSH) to artificial substrates 1-chloro-2,4-dinitrobenzene (CDNB) and p-nitrophenyl acetate. Mitigates neuronal oxidative stress during normal postnatal development and in response to oxidative stresses probably through GSH antioxidant defense mechanism. May play a role in EPS8 signaling. Binds glutathione. This Bos taurus (Bovine) protein is Glutathione S-transferase LANCL1 (LANCL1).